The following is a 248-amino-acid chain: N-acylneuraminate-9-phosphatase (248 aa).

Asp12 contacts Mg(2+). Phosphate-binding residues include Leu13, Asp14, Thr131, Asn132, and Lys164. Mg(2+) is bound at residue Asp14. Asp189 contacts Mg(2+).

It belongs to the HAD-like hydrolase superfamily. NANP family. Mg(2+) is required as a cofactor.

The enzyme catalyses N-acetylneuraminate 9-phosphate + H2O = N-acetylneuraminate + phosphate. The catalysed reaction is N-glycoloylneuraminate 9-phosphate + H2O = N-glycoloylneuraminate + phosphate. It participates in amino-sugar metabolism; N-acetylneuraminate biosynthesis. Inhibited by calcium. Inhibited by vanadate, sodium orthovanate and phosphonate. Catalyzes the dephosphorylation of N-acylneuraminate 9-phosphate (Neu5Ac-9-P) to sialic acid N-acetylneuraminic acid (Neu5Ac). May also use N-glycoloylneuraminate 9-phosphate as substrate. The protein is N-acylneuraminate-9-phosphatase of Mus musculus (Mouse).